The chain runs to 2426 residues: Protein SON (2426 aa).

Ala2 carries the N-acetylalanine modification. Residue Lys16 is modified to N6-acetyllysine. Positions 24 to 42 (LSSGRNEGQLNGETNTPIE) are enriched in polar residues. The interval 24–56 (LSSGRNEGQLNGETNTPIEGNQAGDAAASARSL) is disordered. Residue Lys64 forms a Glycyl lysine isopeptide (Lys-Gly) (interchain with G-Cter in SUMO2) linkage. Positions 77–88 (LRYKPDLKEGSR) are enriched in basic and acidic residues. The segment at 77-155 (LRYKPDLKEG…GNIDLESDSF (79 aa)) is disordered. Ser94 is subject to Phosphoserine. The span at 106–130 (KKSKKHKKHKNKKKKKKKEKEKKYK) shows a compositional bias: basic residues. Basic and acidic residues predominate over residues 131 to 146 (RQPEESESKTKSHDDG). Phosphoserine occurs at positions 142, 152, 154, 160, and 283. N6-acetyllysine is present on Lys288. The interval 305 to 328 (TLVVSSETPTEVYPEPSTSTTMDF) is disordered. The residue at position 400 (Thr400) is a Phosphothreonine. A disordered region spans residues 406–442 (PGPSATPVPELPGPLSTPVPELPGPPATAVPELPGPS). Pro residues predominate over residues 409–442 (SATPVPELPGPLSTPVPELPGPPATAVPELPGPS). Residues 726-895 (LASNTMDSQM…LASGTMDAQM (170 aa)) are 17 X 10 AA tandem repeats of L-A-[ST]-[NSG]-[TS]-MDSQM. The 11 X 7 AA tandem repeats of [DR]-P-Y-R-[LI][AG][QHP] stretch occupies residues 912 to 988 (DPYRLAQDPY…IAPRPYRLAP (77 aa)). Arg950 carries the omega-N-methylarginine modification. Thr959 is modified (phosphothreonine). Ser998 carries the post-translational modification Phosphoserine. 14 repeat units span residues 1006–1011 (ERSMMS), 1014–1019 (ERSMMS), 1021–1026 (ERSMMS), 1030–1035 (ERSMMS), 1038–1043 (ERSMMS), 1046–1051 (ERSMMS), 1055–1060 (ERSMMS), 1063–1068 (ERSMMS), 1071–1076 (ERSMMS), 1080–1085 (DRSMMS), 1089–1094 (DRSMMS), 1100–1105 (DRSMMS), 1111–1116 (DRSMMS), and 1121–1126 (DRSMMS). The 14 X 6 AA repeats of [ED]-R-S-M-M-S stretch occupies residues 1006–1126 (ERSMMSSYER…SYTADRSMMS (121 aa)). Arg1007 carries the post-translational modification Asymmetric dimethylarginine. An Asymmetric dimethylarginine modification is found at Arg1022. Phosphoserine occurs at positions 1035 and 1043. 2 positions are modified to phosphoserine: Ser1060 and Ser1068. Ser1082 is modified (phosphoserine). The segment at 1144-1236 (YMVPPLPPEE…PTDYSVSASD (93 aa)) is disordered. Residues 1147-1179 (PPLPPEEPPTMPPLPPEEPPMTPPLPPEEPPEG) are 3 X 11 AA tandem repats of P-P-L-P-P-E-E-P-P-[TME]-[MTG]. Over residues 1147–1180 (PPLPPEEPPTMPPLPPEEPPMTPPLPPEEPPEGP) the composition is skewed to pro residues. Polar residues predominate over residues 1186-1196 (QSALTAENTWP). Positions 1198-1224 (EVPSSPSEESVSQPEPPVSQSEISEPS) are enriched in low complexity. Positions 1359-1390 (VLESSAVTVLESSTVTVLESSTVTVLEPSVVT) are 4 X 8 AA tandem repeats of V-L-E-SS-[AVT]-VT. 2 positions are modified to phosphoserine: Ser1556 and Ser1651. Positions 1645–1722 (TSPSGGSEAD…KETLPDSGFS (78 aa)) are disordered. Basic and acidic residues predominate over residues 1677-1689 (KDTEEPLPVKESD). Ser1697, Ser1701, Ser1747, Ser1759, Ser1766, Ser1769, Ser1782, and Ser1783 each carry phosphoserine. The tract at residues 1754–2054 (GPLLASDVGR…RSPKRLTDLD (301 aa)) is disordered. 3 stretches are compositionally biased toward basic and acidic residues: residues 1790–1801 (YEIFVKVKDTHE), 1809–1822 (RDKG…DSSL), and 1830–1845 (KSSE…ESRS). Composition is skewed to basic residues over residues 1846-1909 (RARK…RKRS) and 1917-1948 (TVRA…RRRS). Tandem repeats lie at residues 1925 to 1931 (PSRRSRS), 1934 to 1952 (PSRR…FSIS), 1953 to 1959 (PSRRSRT), 1960 to 1966 (PSRRSRT), 1967 to 1973 (PSRRSRT), 1974 to 1980 (PSRRSRT), 1981 to 1987 (PSRRSRT), 1988 to 1994 (PSRRSRT), and 1995 to 2013 (PSRR…FSIS). The interval 1925-1994 (PSRRSRSHTP…SRTPSRRSRT (70 aa)) is 7 X 7 AA repeats of P-S-R-R-S-R-[TS]. A 2 X 19 AA repeats of P-S-R-R-R-R-S-R-S-V-V-R-R-R-S-F-S-I-S region spans residues 1934 to 2013 (PSRRRRSRSV…VVRRRSFSIS (80 aa)). Phosphoserine occurs at positions 1948, 1950, and 1952. The span at 1955–2009 (RRSRTPSRRSRTPSRRSRTPSRRSRTPSRRSRTPSRRSRTPSRRRRSRSVVRRRS) shows a compositional bias: basic residues. 5 positions are modified to phosphoserine: Ser2009, Ser2011, Ser2013, Ser2029, and Ser2031. The 3 X tandem repeats of [ST]-P-[VLI]-R-[RL]-[RK]-[RF]-S-R stretch occupies residues 2013–2039 (SPVRLRRSRTPLRRRFSRSPIRRKRSR). Basic residues predominate over residues 2016–2038 (RLRRSRTPLRRRFSRSPIRRKRS). A compositionally biased stretch (basic and acidic residues) spans 2039-2054 (RSSERGRSPKRLTDLD). Lys2055 carries the post-translational modification N6-acetyllysine; alternate. Lys2055 participates in a covalent cross-link: Glycyl lysine isopeptide (Lys-Gly) (interchain with G-Cter in SUMO2); alternate. Lys2092 participates in a covalent cross-link: Glycyl lysine isopeptide (Lys-Gly) (interchain with G-Cter in SUMO2). Ser2129 is subject to Phosphoserine. A Glycyl lysine isopeptide (Lys-Gly) (interchain with G-Cter in SUMO2) cross-link involves residue Lys2149. Position 2163 is a phosphothreonine (Thr2163). The disordered stretch occupies residues 2200–2220 (KNGEENKDDDNVFSSNLPSEP). Ser2238 carries the phosphoserine modification. The G-patch domain maps to 2305 to 2351 (TGGMGAVLMRKMGWREGEGLGKNKEGNKEPILVDFKTDRKGLVAVGE). One can recognise a DRBM domain in the interval 2371–2426 (HPVSALMEICNKRRWQPPEFLLVHDSGPDHRKHFLFRVLRNGALTRPNCMFFLNRY).

Interacts with SRSF2. Associates with the spliceosome. Interacts with the AML1-MTG8 (AML1-ETO) fusion protein, possibly leading to trigger signals inhibiting leukemogenesis. Interacts with USH1G. As to expression, widely expressed, with the higher expression seen in leukocyte and heart.

The protein resides in the nucleus speckle. In terms of biological role, RNA-binding protein that acts as a mRNA splicing cofactor by promoting efficient splicing of transcripts that possess weak splice sites. Specifically promotes splicing of many cell-cycle and DNA-repair transcripts that possess weak splice sites, such as TUBG1, KATNB1, TUBGCP2, AURKB, PCNT, AKT1, RAD23A, and FANCG. Probably acts by facilitating the interaction between Serine/arginine-rich proteins such as SRSF2 and the RNA polymerase II. Also binds to DNA; binds to the consensus DNA sequence: 5'-GA[GT]AN[CG][AG]CC-3'. May indirectly repress hepatitis B virus (HBV) core promoter activity and transcription of HBV genes and production of HBV virions. Essential for correct RNA splicing of multiple genes critical for brain development, neuronal migration and metabolism, including TUBG1, FLNA, PNKP, WDR62, PSMD3, PCK2, PFKL, IDH2, and ACY1. In Homo sapiens (Human), this protein is Protein SON (SON).